A 421-amino-acid chain; its full sequence is Synaptotagmin-1 (421 aa).

Topologically, residues 1 to 57 (MVSASRPEALAAPVTTVATLVPHNATEPASPGEGKEDAFSKLKQKFMNELHKIPLPP) are vesicular. Asn24 is a glycosylation site (N-linked (GlcNAc...) asparagine). Residues 58-79 (WALIAIAIVAVLLVVTCCFCVC) traverse the membrane as a helical segment. Residues Cys74, Cys75, Cys77, Cys79, and Cys82 are each lipidated (S-palmitoyl cysteine). Residues 80–421 (KKCLFKKKNK…EVDAMLAVKK (342 aa)) lie on the Cytoplasmic side of the membrane. Residues 112–141 (TMKDQALKDDDAETGLTDGEEKEEPKEEEK) form a disordered region. Over residues 121–133 (DDAETGLTDGEEK) the composition is skewed to acidic residues. Thr128 carries the phosphothreonine modification. The segment at 135-381 (EPKEEEKLGK…AIGKVFVGYN (247 aa)) is phospholipid binding. The region spanning 141–260 (KLGKLQYSLD…DFGHVTEEWR (120 aa)) is the C2 1 domain. The Ca(2+) site is built by Leu171, Asp172, and Asp178. Position 229 is a phosphotyrosine (Tyr229). Ca(2+) is bound by residues Asp230, Phe231, Asp232, Ser235, Lys236, and Asp238. Phosphoserine is present on Ser264. The C2 2 domain maps to 272-405 (KLGDICFSLR…NPRRPIAQWH (134 aa)). Residues Asp303 and Asp309 each coordinate Ca(2+). Phosphoserine occurs at positions 342 and 344. Ca(2+) is bound by residues Asp363, Asp365, and Asp371.

Belongs to the synaptotagmin family. In terms of assembly, homotetramer. Heterodimer; heterodimerizes with SYT2 in presence of calcium. Interacts with SCAMP5. Interacts with STON2. Forms a complex with SV2B, syntaxin 1 and SNAP25. Interacts with SV2A, SV2B and SV2C. Interacts with RIMS1. Interacts with PRRT2. Interacts with DNAJC5 in a phosphorylation-dependent manner. Interacts (via N-terminus) with RAB3A. Interacts with SYT12. Interacts with calmodulin. Interacts with DNM1 (via C-terminal proline-rich domain (PRD)); this interaction facilitates vesicle fission during clathrin-mediated endocytosis (CME). Ca(2+) is required as a cofactor. Glycosylated. Expressed in the brain and adrenal medulla (at protein level).

It localises to the cytoplasmic vesicle. The protein resides in the secretory vesicle membrane. It is found in the secretory vesicle. Its subcellular location is the synaptic vesicle membrane. The protein localises to the chromaffin granule membrane. It localises to the cytoplasm. In terms of biological role, calcium sensor that participates in triggering neurotransmitter release at the synapse. May have a regulatory role in the membrane interactions during trafficking of synaptic vesicles at the active zone of the synapse. It binds acidic phospholipids with a specificity that requires the presence of both an acidic head group and a diacyl backbone. A Ca(2+)-dependent interaction between synaptotagmin and putative receptors for activated protein kinase C has also been reported. It can bind to at least three additional proteins in a Ca(2+)-independent manner; these are neurexins, syntaxin and AP2. Plays a role in dendrite formation by melanocytes. The sequence is that of Synaptotagmin-1 from Mus musculus (Mouse).